A 393-amino-acid chain; its full sequence is Major outer membrane porin, serovar E (393 aa).

The signal sequence occupies residues 1–22 (MKKLLKSVLVFAALSSASSLQA).

This sequence belongs to the chlamydial porin (CP) (TC 1.B.2) family. Part of a disulfide cross-linked outer membrane complex (COMC) composed of the major outer membrane porin (MOMP), the small cysteine-rich protein (OmcA) and the large cysteine-rich periplasmic protein (OmcB).

It localises to the cell outer membrane. Its function is as follows. In elementary bodies (EBs, the infectious stage, which is able to survive outside the host cell) provides the structural integrity of the outer envelope through disulfide cross-links with the small cysteine-rich protein and the large cysteine-rich periplasmic protein. It has been described in publications as the Sarkosyl-insoluble COMC (Chlamydia outer membrane complex), and serves as the functional equivalent of peptidoglycan. Permits diffusion of specific solutes through the outer membrane. This is Major outer membrane porin, serovar E (ompA) from Chlamydia trachomatis.